Here is a 132-residue protein sequence, read N- to C-terminus: uncharacterized protein (132 aa).

2 consecutive transmembrane segments (helical) span residues 12 to 32 (VIGF…KKLY) and 37 to 57 (LTLA…IPVL).

Its subcellular location is the cell membrane. This is an uncharacterized protein from Methanocaldococcus jannaschii (strain ATCC 43067 / DSM 2661 / JAL-1 / JCM 10045 / NBRC 100440) (Methanococcus jannaschii).